Reading from the N-terminus, the 307-residue chain is Elongation factor Ts (307 aa).

The segment at 80-83 (TDFV) is involved in Mg(2+) ion dislocation from EF-Tu.

The protein belongs to the EF-Ts family.

Its subcellular location is the cytoplasm. Associates with the EF-Tu.GDP complex and induces the exchange of GDP to GTP. It remains bound to the aminoacyl-tRNA.EF-Tu.GTP complex up to the GTP hydrolysis stage on the ribosome. In Rhodopseudomonas palustris (strain BisA53), this protein is Elongation factor Ts.